Consider the following 168-residue polypeptide: Pheromone-binding protein (168 aa).

An N-terminal signal peptide occupies residues 1 to 26 (MNKTTTKMKVAVVAIVVYLAVGNVDS). 3 cysteine pairs are disulfide-bonded: Cys45–Cys80, Cys76–Cys134, and Cys123–Cys143.

This sequence belongs to the PBP/GOBP family. As to quaternary structure, homodimer. Antenna.

Its function is as follows. This major soluble protein in olfactory sensilla of male moths might serve to solubilize the extremely hydrophobic pheromone molecules and to transport pheromone through the aqueous lymph to receptors located on olfactory cilia. PBP is also found in sensilla from female M.sexta antennae. In Manduca sexta (Tobacco hawkmoth), this protein is Pheromone-binding protein.